An 83-amino-acid polypeptide reads, in one-letter code: Exodeoxyribonuclease 7 small subunit (83 aa).

It belongs to the XseB family. In terms of assembly, heterooligomer composed of large and small subunits.

It localises to the cytoplasm. It carries out the reaction Exonucleolytic cleavage in either 5'- to 3'- or 3'- to 5'-direction to yield nucleoside 5'-phosphates.. Bidirectionally degrades single-stranded DNA into large acid-insoluble oligonucleotides, which are then degraded further into small acid-soluble oligonucleotides. This is Exodeoxyribonuclease 7 small subunit from Novosphingobium aromaticivorans (strain ATCC 700278 / DSM 12444 / CCUG 56034 / CIP 105152 / NBRC 16084 / F199).